Reading from the N-terminus, the 791-residue chain is Solute carrier family 26 member 9 (791 aa).

At 1-70 the chain is on the cytoplasmic side; the sequence is MSQPRPRYVV…WLPKYKIKDY (70 aa). The helical transmembrane segment at 71–96 threads the bilayer; that stretch reads IIPDLLGGLSGGSIQVPQGMAFALLA. Residues 97 to 99 are Extracellular-facing; sequence NLP. The chain crosses the membrane as a helical span at residues 100–117; it reads AVNGLYSSFFPLLTYFFL. Over 118-128 the chain is Cytoplasmic; sequence GGVHQMVPGTF. The helical transmembrane segment at 129–142 threads the bilayer; it reads AVISILVGNICLQL. Topologically, residues 143-171 are extracellular; the sequence is APESKFQVFNNATNESYVDTAAMEAERLH. A helical membrane pass occupies residues 172-190; the sequence is VSATLACLTAIIQMGLGFM. The Cytoplasmic portion of the chain corresponds to 191–202; sequence QFGFVAIYLSES. The helical transmembrane segment at 203–224 threads the bilayer; that stretch reads FIRGFMTAAGLQILISVLKYIF. Residues 225–235 are Extracellular-facing; sequence GLTIPSYTGPG. The segment at residues 236 to 244 is an intramembrane region (helical); it reads SIVFTFIDI. The Extracellular segment spans residues 245 to 254; it reads CKNLPHTNIA. Residues 255–273 form a helical membrane-spanning segment; sequence SLIFALISGAFLVLVKELN. Topologically, residues 274–281 are cytoplasmic; it reads ARYMHKIR. A helical transmembrane segment spans residues 282–297; that stretch reads FPIPTEMIVVVVATAI. The Extracellular portion of the chain corresponds to 298–327; sequence SGGCKMPKKYHMQIVGEIQRGFPTPVSPVV. A helical transmembrane segment spans residues 328–348; the sequence is SQWKDMIGTAFSLAIVSYVIN. The Cytoplasmic portion of the chain corresponds to 349-366; it reads LAMGRTLANKHGYDVDSN. A helical transmembrane segment spans residues 367-382; sequence QEMIALGCSNFFGSFF. At 383-390 the chain is on the extracellular side; it reads KIHVICCA. Residues 391-400 traverse the membrane as a helical segment; that stretch reads LSVTLAVDGA. Residues 401–404 are Cytoplasmic-facing; that stretch reads GGKS. The helical transmembrane segment at 405–423 threads the bilayer; sequence QVASLCVSLVVMITMLVLG. Topologically, residues 424–428 are extracellular; sequence IYLYP. The helical transmembrane segment at 429-450 threads the bilayer; sequence LPKSVLGALIAVNLKNSLKQLT. Over 451–464 the chain is Cytoplasmic; that stretch reads DPYYLWRKSKLDCC. The helical transmembrane segment at 465–476 threads the bilayer; it reads IWVVSFLSSFFL. Residue Ser-477 is a topological domain, extracellular. Residues 478–489 form a helical membrane-spanning segment; that stretch reads LPYGVAVGVAFS. Residues 490 to 791 are Cytoplasmic-facing; the sequence is VLVVVFQTQF…MFHAETLTAL (302 aa). One can recognise an STAS domain in the interval 519-737; it reads TYNRAQDIQG…PSIHDAVLFA (219 aa). The interval 602-650 is disordered; it reads FENAPPTDPNNNQTPANGTSVSYITFSPDSSSPAQSEPPASAEAPGEPS. Residues 610-626 are compositionally biased toward polar residues; it reads PNNNQTPANGTSVSYIT. The span at 628–650 shows a compositional bias: low complexity; sequence SPDSSSPAQSEPPASAEAPGEPS.

It belongs to the SLC26A/SulP transporter (TC 2.A.53) family. In terms of assembly, homodimer. Predominantly expressed in lung at the luminal side of the bronchiolar and alveolar epithelium of lung. To a lower extent, also expressed in pancreas and prostate.

It localises to the cell membrane. The protein localises to the endomembrane system. The catalysed reaction is chloride(in) = chloride(out). It carries out the reaction hydrogencarbonate(in) + chloride(out) = hydrogencarbonate(out) + chloride(in). Inhibited by ammonium and thiosulfate. In terms of biological role, ion transporter that can act both as an ion channel and anion exchanger. Mainly acts as a chloride channel, which mediate uncoupled chloride anion transport in an alternate-access mechanism where a saturable binding site is alternately exposed to either one or the other side of the membrane. Also acts as a DIDS- and thiosulfate- sensitive anion exchanger the exchange of chloride for bicarbonate ions across the cell membrane. The chain is Solute carrier family 26 member 9 from Homo sapiens (Human).